The following is a 101-amino-acid chain: CRISPR-associated endoribonuclease Cas2 (101 aa).

Asp8 lines the Mg(2+) pocket.

This sequence belongs to the CRISPR-associated endoribonuclease Cas2 protein family. Homodimer, forms a heterotetramer with a Cas1 homodimer. It depends on Mg(2+) as a cofactor.

CRISPR (clustered regularly interspaced short palindromic repeat), is an adaptive immune system that provides protection against mobile genetic elements (viruses, transposable elements and conjugative plasmids). CRISPR clusters contain sequences complementary to antecedent mobile elements and target invading nucleic acids. CRISPR clusters are transcribed and processed into CRISPR RNA (crRNA). Functions as a ssRNA-specific endoribonuclease. Involved in the integration of spacer DNA into the CRISPR cassette. This is CRISPR-associated endoribonuclease Cas2 from Treponema denticola (strain ATCC 35405 / DSM 14222 / CIP 103919 / JCM 8153 / KCTC 15104).